Here is a 312-residue protein sequence, read N- to C-terminus: Taste receptor type 2 member 9 (312 aa).

The Extracellular segment spans residues 1–9 (MPSAIEAIY). A helical transmembrane segment spans residues 10-32 (IILIAGELTIGIWGNGFIVLVNC). Residues 33-52 (XDWLKRRDISLIDIILISLA) lie on the Cytoplasmic side of the membrane. A helical membrane pass occupies residues 53–72 (ISRICLLCVISLDGFFMLLF). At 73 to 86 (PGTYGNSVLVSIVN) the chain is on the extracellular side. Residues 87–109 (VVWTFANNSSLWFTSCLSIFYLL) traverse the membrane as a helical segment. Topologically, residues 110-128 (KIANISHPFFFWLKLKINK) are cytoplasmic. The helical transmembrane segment at 129 to 146 (VMLAILLGSFLISLIISV) threads the bilayer. The Extracellular segment spans residues 147-180 (XKNDDMWYHLFKVSXEENITWEFKVSKIPGTFKQ). N-linked (GlcNAc...) asparagine glycosylation occurs at Asn-164. The chain crosses the membrane as a helical span at residues 181-203 (LTLNLGGRVPFILCLISFFLLLF). Topologically, residues 204 to 234 (SLVRHTKQIQLHATGFRDPSTEAHMRAIKAV) are cytoplasmic. A helical membrane pass occupies residues 235–257 (IIFLLLLIVYYPVFLVMTSSALI). The Extracellular segment spans residues 258–261 (PQGK). Residues 262–284 (LVLMIGDIVTVIFPSSHSFILIM) traverse the membrane as a helical segment. Over 285–312 (GNSKLREAFLKMLRFVKGFLRRRKPFVP) the chain is Cytoplasmic.

Belongs to the G-protein coupled receptor T2R family.

The protein localises to the membrane. Functionally, gustducin-coupled receptor implicated in the perception of bitter compounds in the oral cavity and the gastrointestinal tract. Signals through PLCB2 and the calcium-regulated cation channel TRPM5. The polypeptide is Taste receptor type 2 member 9 (TAS2R9) (Pan troglodytes (Chimpanzee)).